Here is a 424-residue protein sequence, read N- to C-terminus: 3-phosphoshikimate 1-carboxyvinyltransferase (424 aa).

Lys-21, Ser-22, and Arg-26 together coordinate 3-phosphoshikimate. Lys-21 serves as a coordination point for phosphoenolpyruvate. The phosphoenolpyruvate site is built by Gly-92 and Arg-120. Residues Ser-163, Ser-164, Gln-165, Ser-191, Asp-306, and Lys-333 each coordinate 3-phosphoshikimate. Residue Gln-165 participates in phosphoenolpyruvate binding. Residue Asp-306 is the Proton acceptor of the active site. Positions 337, 379, and 405 each coordinate phosphoenolpyruvate.

This sequence belongs to the EPSP synthase family. Monomer.

It localises to the cytoplasm. It catalyses the reaction 3-phosphoshikimate + phosphoenolpyruvate = 5-O-(1-carboxyvinyl)-3-phosphoshikimate + phosphate. It functions in the pathway metabolic intermediate biosynthesis; chorismate biosynthesis; chorismate from D-erythrose 4-phosphate and phosphoenolpyruvate: step 6/7. Functionally, catalyzes the transfer of the enolpyruvyl moiety of phosphoenolpyruvate (PEP) to the 5-hydroxyl of shikimate-3-phosphate (S3P) to produce enolpyruvyl shikimate-3-phosphate and inorganic phosphate. The chain is 3-phosphoshikimate 1-carboxyvinyltransferase from Clostridium perfringens (strain 13 / Type A).